The following is a 509-amino-acid chain: Maturase K (509 aa).

It belongs to the intron maturase 2 family. MatK subfamily.

Its subcellular location is the plastid. The protein localises to the chloroplast. Its function is as follows. Usually encoded in the trnK tRNA gene intron. Probably assists in splicing its own and other chloroplast group II introns. In Solanum lycopersicum (Tomato), this protein is Maturase K.